The primary structure comprises 574 residues: Proline--tRNA ligase (574 aa).

This sequence belongs to the class-II aminoacyl-tRNA synthetase family. ProS type 1 subfamily. As to quaternary structure, homodimer.

The protein resides in the cytoplasm. It catalyses the reaction tRNA(Pro) + L-proline + ATP = L-prolyl-tRNA(Pro) + AMP + diphosphate. In terms of biological role, catalyzes the attachment of proline to tRNA(Pro) in a two-step reaction: proline is first activated by ATP to form Pro-AMP and then transferred to the acceptor end of tRNA(Pro). As ProRS can inadvertently accommodate and process non-cognate amino acids such as alanine and cysteine, to avoid such errors it has two additional distinct editing activities against alanine. One activity is designated as 'pretransfer' editing and involves the tRNA(Pro)-independent hydrolysis of activated Ala-AMP. The other activity is designated 'posttransfer' editing and involves deacylation of mischarged Ala-tRNA(Pro). The misacylated Cys-tRNA(Pro) is not edited by ProRS. This is Proline--tRNA ligase from Hahella chejuensis (strain KCTC 2396).